The chain runs to 225 residues: uncharacterized protein (225 aa).

This is an uncharacterized protein from Schizosaccharomyces pombe (strain 972 / ATCC 24843) (Fission yeast).